Here is a 424-residue protein sequence, read N- to C-terminus: Chloroquine resistance transporter (424 aa).

Topologically, residues 1 to 49 are cytoplasmic; sequence MKFASKKNNQKNSSKNDERYRELDNLVQEGNGSRLGGGSCLGKCAHVFK. The stretch at 50 to 58 is an intramembrane region; that stretch reads LIFKEIKDN. The helical transmembrane segment at 59 to 83 threads the bilayer; it reads IFIYILSIIYLSVSVMNTIFAKRTL. At 84 to 89 the chain is on the vacuolar side; the sequence is NKIGNY. Residues 90–111 traverse the membrane as a helical segment; it reads SFVTSETHNFICMIMFFIVYSL. Residues 112-126 are Cytoplasmic-facing; that stretch reads FGNKKGNSKERHRSF. The chain crosses the membrane as a helical span at residues 127–147; it reads NLQFFAISMLDACSVILAFIG. Residues 148-152 are Vacuolar-facing; that stretch reads LTRTT. Residues 153–173 form a helical membrane-spanning segment; sequence GNIQSFVLQLSIPINMFFCFL. Topologically, residues 174-180 are cytoplasmic; it reads ILRYRYH. Residues 181–202 traverse the membrane as a helical segment; it reads LYNYLGAVIIVVTIALVEMKLS. The Vacuolar segment spans residues 203–210; it reads FETQEENS. A helical transmembrane segment spans residues 211-236; sequence IIFNLVLISSLIPVCFSNMTREIVFK. At 237–241 the chain is on the cytoplasmic side; the sequence is KYKID. The helical transmembrane segment at 242–263 threads the bilayer; the sequence is ILRLNAMVSFFQLFTSCLILPV. Residues 264–279 lie on the Vacuolar side of the membrane; sequence YTLPFLKQLHLPYNEI. The stretch at 280-292 is an intramembrane region; the sequence is WTNIKNGFACLFL. Intrachain disulfides connect cysteine 289-cysteine 312 and cysteine 301-cysteine 309. The Vacuolar portion of the chain corresponds to 293–314; sequence GRNTVVENCGLGMAKLCDDCDG. A helical membrane pass occupies residues 315–339; the sequence is AWKTFALFSFFDICDNLITSYIIDK. Topologically, residues 340-343 are cytoplasmic; that stretch reads FSTM. Residues 344 to 361 traverse the membrane as a helical segment; the sequence is TYTIVSCIQGPALAIAYY. Residues 362 to 374 are Vacuolar-facing; it reads FKFLAGDVVREPR. Residues 375–397 traverse the membrane as a helical segment; the sequence is LLDFVTLFGYLFGSIIYRVGNII. The Cytoplasmic segment spans residues 398-424; sequence LERKKMRNEENEDSEGELTNVDSIITQ.

The protein belongs to the CRT-like transporter family. Monomer.

Its subcellular location is the membrane. It is found in the vacuole membrane. It carries out the reaction L-arginine(in) = L-arginine(out). It catalyses the reaction L-lysine(in) = L-lysine(out). The enzyme catalyses L-histidine(out) = L-histidine(in). The catalysed reaction is Fe(3+)(in) = Fe(3+)(out). It carries out the reaction Fe(2+)(in) = Fe(2+)(out). In terms of biological role, nutrient transporter. Substrate transport is pH-dependent. Can transport arginine, lysine, histidine and peptides. Involved in maintaining the osmotic homeostasis of the digestive vacuole. Required for the normal asexual intraerythrocytic proliferation of parasites. Can transport Fe(2+) and Fe(3+). The chain is Chloroquine resistance transporter from Plasmodium falciparum (isolate 7G8).